Reading from the N-terminus, the 130-residue chain is Small ribosomal subunit protein uS8 (130 aa).

Belongs to the universal ribosomal protein uS8 family. As to quaternary structure, part of the 30S ribosomal subunit.

Its function is as follows. One of the primary rRNA binding proteins, it binds directly to 16S rRNA central domain where it helps coordinate assembly of the platform of the 30S subunit. This is Small ribosomal subunit protein uS8 from Nitrosopumilus maritimus (strain SCM1).